The sequence spans 231 residues: Killer cell lectin-like receptor subfamily F member 1 (231 aa).

Topologically, residues 1 to 38 (MQDEERYMTLNVQSKKRSSAQTSQLTFKDYSVTLHWYK) are cytoplasmic. Residue tyrosine 7 is modified to Phosphotyrosine. Residues 39 to 59 (ILLGISGTVNGILTLTLISLI) traverse the membrane as a helical; Signal-anchor for type II membrane protein segment. At 60-231 (LLVSQGVLLK…SSVFKWICQY (172 aa)) the chain is on the extracellular side. Residues asparagine 77, asparagine 91, asparagine 96, and asparagine 176 are each glycosylated (N-linked (GlcNAc...) asparagine). The 110-residue stretch at 121–230 (YQGKCYWFSN…CSSVFKWICQ (110 aa)) folds into the C-type lectin domain. Cystine bridges form between cysteine 142–cysteine 229 and cysteine 208–cysteine 221.

As to quaternary structure, homodimer. Interacts with CLEC2B. Phosphorylated on Tyr-7; this phosphorylation is required for NKp80/KLRF1-mediated cytotoxicity. In terms of tissue distribution, strongly expressed in peripheral blood leukocytes and spleen, with weaker expression in lymph node and adult liver, and no expression detected in bone marrow, thymus, and fetal liver. Not expressed in brain, heart, placenta, lung, kidney, skeletal muscle, and pancreas. Within peripheral blood leukocyte and immunocyte cell lines, expression was predominant in NK cells but was also detected in monocytes.

Its subcellular location is the membrane. Its function is as follows. Functions as an activating receptor involved in immunosurveillance upon binding to various ligands displayed at the surface of myeloid cells. Upon interaction with CLEC2B ligand, stimulates NK-cell cytotoxicity and cytokine production leading to the cytolysis of malignant CLEC2B-expressing myeloid cells. Actviation of the common cytotoxicity pathway involves SRC and SYK kinases. The sequence is that of Killer cell lectin-like receptor subfamily F member 1 (KLRF1) from Homo sapiens (Human).